A 382-amino-acid polypeptide reads, in one-letter code: Gap junction alpha-1 protein (382 aa).

Residues 2–23 (GDWSALGKLLDKVQAYSTAGGK) are Cytoplasmic-facing. Ser-5 carries the post-translational modification Phosphoserine. Residues 24–44 (VWLSVLFIFRILLLGTAVESA) form a helical membrane-spanning segment. Over 45–76 (WGDEQSAFRCNTQQPGCENVCYDKSFPISHVR) the chain is Extracellular. Intrachain disulfides connect Cys-54-Cys-192 and Cys-187-Cys-198. The helical transmembrane segment at 77 to 97 (FWVLQIIFVSVPTLLYLAHVF) threads the bilayer. Residues 98–155 (YVMRKEEKLNKKEEELKVAQTDGVNVEMHLKQIEIKKFKYGIEEHGKVKMRGGLLRTY) are Cytoplasmic-facing. Lys-144 participates in a covalent cross-link: Glycyl lysine isopeptide (Lys-Gly) (interchain with G-Cter in SUMO). The chain crosses the membrane as a helical span at residues 156-176 (IISILFKSIFEVAFLLIQWYI). Residues 177–207 (YGFSLSAVYTCKRDPCPHQVDCFLSRPTEKT) are Extracellular-facing. Residues 208-228 (IFIIFMLVVSLVSLALNIIEL) form a helical membrane-spanning segment. Topologically, residues 229-382 (FYVFFKGVKD…SRPRPDDLEI (154 aa)) are cytoplasmic. Lys-237 participates in a covalent cross-link: Glycyl lysine isopeptide (Lys-Gly) (interchain with G-Cter in SUMO). The interaction with NOV stretch occupies residues 244-382 (SDPYHTTSGA…SRPRPDDLEI (139 aa)). Tyr-247 bears the Phosphotyrosine mark. A phosphoserine mark is found at Ser-255 and Ser-262. The interval 264 to 382 (KYAYFNGCSS…SRPRPDDLEI (119 aa)) is interaction with UBQLN4. An S-nitrosocysteine modification is found at Cys-271. Thr-275 bears the Phosphothreonine mark. 2 positions are modified to phosphoserine: Ser-306 and Ser-314. Residues 317-332 (QNRMGQAGSTISNSHA) are compositionally biased toward polar residues. Positions 317–382 (QNRMGQAGST…SRPRPDDLEI (66 aa)) are disordered. At Ser-325 the chain carries Phosphoserine; by CK1. A Phosphothreonine modification is found at Thr-326. Phosphoserine; by CK1 occurs at positions 328 and 330. Phosphoserine occurs at positions 344 and 365. The segment covering 362–374 (RPSSRASSRASSR) has biased composition (low complexity). Ser-368 carries the phosphoserine; by PKC/PRKCG and PKC/PRKCD modification. 2 positions are modified to phosphoserine: Ser-369 and Ser-373.

The protein belongs to the connexin family. Alpha-type (group II) subfamily. As to quaternary structure, a connexon is composed of a hexamer of connexins. Interacts with SGSM3. Interacts with RIC1/CIP150. Interacts with CNST and CSNK1D. Interacts (via C-terminus) with TJP1. Interacts (via C-terminus) with SRC (via SH3 domain). Interacts (not ubiquitinated) with UBQLN4 (via UBA domain). Interacts with NOV. Interacts with TMEM65. Interacts with ANK3/ANKG and PKP2. Post-translationally, phosphorylation at Ser-325, Ser-328 and Ser-330 by CK1 modulates gap junction assembly. Phosphorylated at Ser-368 by PRKCG; phosphorylation induces disassembly of gap junction plaques and inhibition of gap junction activity. Phosphorylation at Ser-368 by PRKCD triggers its internalization into small vesicles leading to proteasome-mediated degradation. Sumoylated with SUMO1, SUMO2 and SUMO3, which may regulate the level of functional Cx43 gap junctions at the plasma membrane. May be desumoylated by SENP1 or SENP2. In terms of processing, S-nitrosylation at Cys-271 is enriched at the muscle endothelial gap junction in arteries, it augments channel permeability and may regulate of smooth muscle cell to endothelial cell communication. Post-translationally, acetylated in the developing cortex; leading to delocalization from the cell membrane.

The protein localises to the cell membrane. It localises to the cell junction. It is found in the gap junction. The protein resides in the endoplasmic reticulum. Functionally, gap junction protein that acts as a regulator of bladder capacity. A gap junction consists of a cluster of closely packed pairs of transmembrane channels, the connexons, through which materials of low MW diffuse from one cell to a neighboring cell. May play a critical role in the physiology of hearing by participating in the recycling of potassium to the cochlear endolymph. Negative regulator of bladder functional capacity: acts by enhancing intercellular electrical and chemical transmission, thus sensitizing bladder muscles to cholinergic neural stimuli and causing them to contract. May play a role in cell growth inhibition through the regulation of NOV expression and localization. Plays an essential role in gap junction communication in the ventricles. The sequence is that of Gap junction alpha-1 protein (GJA1) from Chlorocebus aethiops (Green monkey).